The chain runs to 658 residues: Probable methyl-accepting chemotaxis protein BT9727_0469 (658 aa).

Residues 1 to 14 (MLQGKLRRSSLKAK) lie on the Cytoplasmic side of the membrane. A helical membrane pass occupies residues 15–35 (LLVSFVIVLILPSIVIGWTSY). Residues 36–283 (QQAKTNFNET…ANPIFYKTLT (248 aa)) lie on the Extracellular side of the membrane. A coiled-coil region spans residues 44-109 (ETILQSAEDN…NKLHPEIEAI (66 aa)). In terms of domain architecture, Cache spans 150 to 221 (ITAPYKSSTT…AHPTMKPGDK (72 aa)). Residues 284–304 (VIGISLIIGGVLIYFIIASII) traverse the membrane as a helical segment. The 53-residue stretch at 301 to 353 (ASIISPLKQLVISSKKISEGDLTETITVHSKDEIGQLGESFNEMAASLHHVIS) folds into the HAMP domain. The Cytoplasmic portion of the chain corresponds to 305–658 (SPLKQLVISS…LQEMIGKFKV (354 aa)). At E368 the chain carries Glutamate methyl ester (Glu). Residues 372–622 (SMKQTSEATE…ENAASVQNIA (251 aa)) form the Methyl-accepting transducer domain. Q592 bears the Deamidated glutamine mark. The residue at position 592 (Q592) is a Glutamate methyl ester (Gln). A glutamate methyl ester (Glu) mark is found at E627 and E634.

The protein belongs to the methyl-accepting chemotaxis (MCP) protein family.

The protein resides in the cell membrane. Chemotactic-signal transducers respond to changes in the concentration of attractants and repellents in the environment, transduce a signal from the outside to the inside of the cell, and facilitate sensory adaptation through the variation of the level of methylation. The sequence is that of Probable methyl-accepting chemotaxis protein BT9727_0469 from Bacillus thuringiensis subsp. konkukian (strain 97-27).